A 161-amino-acid chain; its full sequence is 2-C-methyl-D-erythritol 2,4-cyclodiphosphate synthase (161 aa).

Residues D8 and H10 each coordinate a divalent metal cation. 4-CDP-2-C-methyl-D-erythritol 2-phosphate-binding positions include 8–10 (DLH) and 34–35 (HS). H42 contributes to the a divalent metal cation binding site. 4-CDP-2-C-methyl-D-erythritol 2-phosphate is bound by residues 56 to 58 (DIG), 100 to 106 (AEYPKML), and R142.

The protein belongs to the IspF family. In terms of assembly, homotrimer. Requires a divalent metal cation as cofactor.

The enzyme catalyses 4-CDP-2-C-methyl-D-erythritol 2-phosphate = 2-C-methyl-D-erythritol 2,4-cyclic diphosphate + CMP. It functions in the pathway isoprenoid biosynthesis; isopentenyl diphosphate biosynthesis via DXP pathway; isopentenyl diphosphate from 1-deoxy-D-xylulose 5-phosphate: step 4/6. In terms of biological role, involved in the biosynthesis of isopentenyl diphosphate (IPP) and dimethylallyl diphosphate (DMAPP), two major building blocks of isoprenoid compounds. Catalyzes the conversion of 4-diphosphocytidyl-2-C-methyl-D-erythritol 2-phosphate (CDP-ME2P) to 2-C-methyl-D-erythritol 2,4-cyclodiphosphate (ME-CPP) with a corresponding release of cytidine 5-monophosphate (CMP). This chain is 2-C-methyl-D-erythritol 2,4-cyclodiphosphate synthase, found in Buchnera aphidicola subsp. Acyrthosiphon pisum (strain 5A).